A 432-amino-acid chain; its full sequence is Serine--tRNA ligase (432 aa).

238-240 (TAE) provides a ligand contact to L-serine. Position 269 to 271 (269 to 271 (RSE)) interacts with ATP. Glutamate 292 contributes to the L-serine binding site. 356–359 (EVSS) provides a ligand contact to ATP. Serine 392 is a binding site for L-serine.

The protein belongs to the class-II aminoacyl-tRNA synthetase family. Type-1 seryl-tRNA synthetase subfamily. In terms of assembly, homodimer. The tRNA molecule binds across the dimer.

It localises to the cytoplasm. The enzyme catalyses tRNA(Ser) + L-serine + ATP = L-seryl-tRNA(Ser) + AMP + diphosphate + H(+). It carries out the reaction tRNA(Sec) + L-serine + ATP = L-seryl-tRNA(Sec) + AMP + diphosphate + H(+). Its pathway is aminoacyl-tRNA biosynthesis; selenocysteinyl-tRNA(Sec) biosynthesis; L-seryl-tRNA(Sec) from L-serine and tRNA(Sec): step 1/1. Catalyzes the attachment of serine to tRNA(Ser). Is also able to aminoacylate tRNA(Sec) with serine, to form the misacylated tRNA L-seryl-tRNA(Sec), which will be further converted into selenocysteinyl-tRNA(Sec). This Buchnera aphidicola subsp. Baizongia pistaciae (strain Bp) protein is Serine--tRNA ligase.